The primary structure comprises 554 residues: Hyaluronan synthase 3 (554 aa).

Topologically, residues 1 to 15 are cytoplasmic; it reads MPVQLTTALRVVGTS. The helical transmembrane segment at 16–36 threads the bilayer; that stretch reads LFALVVLGGILAAYVTGYQFI. Topologically, residues 37–44 are extracellular; that stretch reads HTEKHYLS. Residues 45–65 form a helical membrane-spanning segment; that stretch reads FGLYGAILGLHLLIQSLFAFL. Over 66 to 378 the chain is Cytoplasmic; that stretch reads EHRRMRRAGR…NSLWFHKHHL (313 aa). The chain crosses the membrane as a helical span at residues 379-399; sequence WMTYESVVTGFFPFFLIATVI. Residues 400 to 409 lie on the Extracellular side of the membrane; the sequence is QLFYRGRIWN. The chain crosses the membrane as a helical span at residues 410–430; it reads ILLFLLTVQLVGIIKATYACF. The Cytoplasmic portion of the chain corresponds to 431 to 441; the sequence is LRGNAEMIFMS. Residues 442–462 form a helical membrane-spanning segment; it reads LYSLLYMSSLLPAKIFAIATI. An N-linked (GlcNAc...) asparagine glycan is attached at N463. The Extracellular portion of the chain corresponds to 463–474; sequence NKSGWGTSGRKT. A helical membrane pass occupies residues 475–495; the sequence is IVVNFIGLIPVSIWVAVLLGG. The Cytoplasmic portion of the chain corresponds to 496–516; sequence LAYTAYCQDLFSETELAFLVS. The helical transmembrane segment at 517–537 threads the bilayer; the sequence is GAILYGCYWVALLMLYLAIIA. The Extracellular segment spans residues 538-554; sequence RRCGKKPEQYSLAFAEV.

This sequence belongs to the NodC/HAS family. Mg(2+) is required as a cofactor. O-GlcNAcylation increases the hyaluronan synthase activity, HAS3 stability and its plasma membrane residence. The concentration of UDP-GlcNAc controls the level of O-GlcNAc modification.

It localises to the cell membrane. The protein localises to the golgi apparatus membrane. The protein resides in the golgi apparatus. Its subcellular location is the trans-Golgi network membrane. It is found in the cytoplasmic vesicle. The enzyme catalyses [hyaluronan](n) + UDP-N-acetyl-alpha-D-glucosamine = N-acetyl-beta-D-glucosaminyl-(1-&gt;4)-[hyaluronan](n) + UDP + H(+). It carries out the reaction N-acetyl-beta-D-glucosaminyl-(1-&gt;4)-[hyaluronan](n) + UDP-alpha-D-glucuronate = [hyaluronan](n+1) + UDP + H(+). It functions in the pathway glycan biosynthesis; hyaluronan biosynthesis. Catalyzes the addition of GlcNAc or GlcUA monosaccharides to the nascent hyaluronan polymer. Therefore, it is essential to hyaluronan synthesis a major component of most extracellular matrices that has a structural role in tissues architectures and regulates cell adhesion, migration and differentiation. This is one of three isoenzymes responsible for cellular hyaluronan synthesis. In Mus musculus (Mouse), this protein is Hyaluronan synthase 3 (Has3).